We begin with the raw amino-acid sequence, 954 residues long: Serine/threonine-protein kinase ste20 (954 aa).

Residues Met1–Ser17 show a composition bias toward low complexity. 2 disordered regions span residues Met1 to Leu165 and Ala203 to Ser316. Residues His18–Arg28 show a composition bias toward basic residues. Composition is skewed to polar residues over residues Asn33–Val42, Ser57–Arg75, and Arg100–Thr121. Composition is skewed to low complexity over residues Ser127–Thr136, Ser143–Ser153, and Ala203–Ala214. The segment covering Val224 to Ala234 has biased composition (pro residues). Composition is skewed to low complexity over residues Ala245–Ser256 and Ala265–Ala277. A CRIB domain is found at Ile334–Gly347. Disordered stretches follow at residues Pro440 to Ser562 and Gln587 to Ile655. Composition is skewed to pro residues over residues Arg463–Leu475 and Met514–Pro527. The 252-residue stretch at Tyr674–Met925 folds into the Protein kinase domain. Residues Ile680–Val688 and Lys703 each bind ATP. The Proton acceptor role is filled by Asp793.

It belongs to the protein kinase superfamily. STE Ser/Thr protein kinase family. STE20 subfamily.

Its subcellular location is the cytoplasm. The protein localises to the nucleus. It carries out the reaction L-seryl-[protein] + ATP = O-phospho-L-seryl-[protein] + ADP + H(+). The enzyme catalyses L-threonyl-[protein] + ATP = O-phospho-L-threonyl-[protein] + ADP + H(+). In terms of biological role, MAP4K component of the MAPK pathway required for the mating pheromone response and the regulation of cell polarity and cell cycle. Phosphorylates histone H2B to form H2BS10ph. In Neurospora crassa (strain ATCC 24698 / 74-OR23-1A / CBS 708.71 / DSM 1257 / FGSC 987), this protein is Serine/threonine-protein kinase ste20 (stk-4).